Consider the following 1129-residue polypeptide: Protein LANA1 (1129 aa).

Disordered stretches follow at residues 1-988 and 1110-1129; these read MAPP…PVPY and LPLTQPGENQGPGDSPQEMT. Composition is skewed to basic and acidic residues over residues 28 to 41 and 48 to 58; these read RSPERCDLGDDLHL and VADSVDGRECG. Positions 85-104 are enriched in pro residues; that stretch reads PVAPIPSPAPATPLPPPALL. Polar residues predominate over residues 139–156; it reads SPESSQRPPLSSPTGRPD. Positions 161-185 are enriched in pro residues; that stretch reads MRPPPSQQTTPPHSPTTPPPEPPSK. Over residues 186-197 the composition is skewed to low complexity; that stretch reads SSPDSLAPSTLR. The segment covering 207–217 has biased composition (polar residues); sequence PQGPSTLNPIC. Residues 263–275 are compositionally biased toward low complexity; sequence PISIGSSSPSEGS. 2 stretches are compositionally biased toward basic and acidic residues: residues 292–301 and 314–323; these read EASKNEKECS and EISKESQVDK. Over residues 324–419 the composition is skewed to acidic residues; that stretch reads DDNDNKDDEE…DKKEDEEDGG (96 aa). Over residues 431–471 the composition is skewed to low complexity; the sequence is QQQQEPQQQEPQQQEPQQQEPQQQEPQQQEPQQQEPQQQEP. Over residues 472-528 the composition is skewed to basic and acidic residues; that stretch reads QQREPQQREPQQREPQQREPQQREPQQREPQQREPQQREPQQREPQQREPQQREPQQ. Positions 529-596 are enriched in low complexity; that stretch reads REPQQQEPQQ…QQQEPQQQDE (68 aa). Acidic residues predominate over residues 597-888; the sequence is QQQDEQQQDE…QELEEVEEQE (292 aa). Residues 924–934 are compositionally biased toward polar residues; sequence THEQIASSPPG. The segment covering 962-979 has biased composition (basic residues); it reads PGVRMRRVPVTHPKKPHP. Residues 1008–1129 are DNA-binding domain; that stretch reads FLGKDGRRDP…GPGDSPQEMT (122 aa).

As to quaternary structure, homooligomer. Interacts with host BRD2. Interacts with host RELA, ELOB, ELOC and CUL5; these interactions induce the proteasomal degradation of host RELA. Interacts with host TRIM28 and NFE2L2/NRF2; these interactions are essential for the shutdown of lytic gene expression during the early stage of infection. Interacts (via N-terminus) with host histones H2A and H2B; these interactions are essential to dock LANA1 onto chromosomes. Interacts with host BUB1 and PCNA. Interacts with host NAP1L1; this interaction is required for LANA1-dependent DNA replication. Interacts with components of the host MLL1 complex KMT2A and WDR5.

The protein localises to the host nucleus. In terms of biological role, multifunctional protein that plays a role in the replication and long-term persistence of the viral episomal genome in dividing cells. Binds to mitotic chromosomes via its N-terminal region and to a 16-bp imperfect palindrome within the origin of replication (oriP) located in the viral terminal repeat (TR) through its C-terminal. Tethers viral episomes to chromosomes during mitosis. Plays a critical role in the shutdown of lytic gene expression during the early stage of infection by interacting with host TRIM28. Also plays a role in the repression of host NF-kappa-B activity upon TNF-alpha stimulation by promoting the proteasomal degradation of host RELA. Promotes nuclear localization and cleavage of host STAT6 leading to constitutive activation of the IL13/STAT6 signaling pathway to promote viral latency. Interacts with and modulates the histone methyltransferase MLL1 complex activity, leading to its recruitment on viral DNA terminal repeats changing the dynamic of histone H3 methylated 'Lys-4'(H3K4me) profile during the initial hours following infection. The polypeptide is Protein LANA1 (LANA1) (Homo sapiens (Human)).